A 617-amino-acid polypeptide reads, in one-letter code: Alkaline/neutral invertase E, chloroplastic (617 aa).

The N-terminal 45 residues, Met-1–Arg-45, are a transit peptide targeting the chloroplast. A Phosphoserine modification is found at Ser-87.

The protein belongs to the glycosyl hydrolase 100 family. Expressed in roots, leaves and flowers.

Its subcellular location is the plastid. It localises to the chloroplast. It carries out the reaction Hydrolysis of terminal non-reducing beta-D-fructofuranoside residues in beta-D-fructofuranosides.. Chloroplastic invertase that cleaves sucrose into glucose and fructose and is associated with the development of the photosynthetic apparatus and the assimilation of nitrogen in seedlings to control the sucrose to hexose ratio. Participates in the carbon flux between the cytosol and plastids in leaves. This chain is Alkaline/neutral invertase E, chloroplastic, found in Arabidopsis thaliana (Mouse-ear cress).